Here is a 156-residue protein sequence, read N- to C-terminus: Cellulose synthase operon protein D (156 aa).

Its pathway is glycan metabolism; bacterial cellulose biosynthesis. In terms of biological role, may have a major role in the perfection of crystallization, involved either in the pore structure itself or in the organization of the pores within the linear array of terminal synthesizing complexes (TCs). In Komagataeibacter xylinus (Gluconacetobacter xylinus), this protein is Cellulose synthase operon protein D (bcsDI).